A 1034-amino-acid polypeptide reads, in one-letter code: Tubulin glycylase 3D (1034 aa).

Polar residues-rich tracts occupy residues 1 to 13 (MINS…QTLN) and 131 to 146 (QVNS…QNDF). Disordered regions lie at residues 1–21 (MINS…SQMD), 131–166 (QVNS…STDY), and 189–208 (LNQQ…DNSQ). A compositionally biased stretch (basic residues) spans 151–161 (RKPKNPTTKKR). The segment covering 189–199 (LNQQNQQQQDL) has biased composition (low complexity). The 360-residue stretch at 571–930 (DINNVIDDEK…YGMAQKSGIK (360 aa)) folds into the TTL domain. ATP-binding positions include 741–744 (QKYI), lysine 754, and aspartate 756. The interval 1002 to 1034 (HDQKQFSSQQANNIETYSRPQTAKSQTQSSKKL) is disordered.

It localises to the cytoplasm. Its function is as follows. Probable glycylase which modifies tubulin, generating side chains of glycine on the gamma-carboxyl groups of specific glutamate residues within the C-terminal tail of tubulin. The chain is Tubulin glycylase 3D (TTLL3D) from Tetrahymena thermophila (strain SB210).